The sequence spans 310 residues: Protoheme IX farnesyltransferase 2 (310 aa).

9 helical membrane passes run 25 to 45 (PGII…AAKG), 49 to 69 (LVLM…GCAI), 98 to 118 (HVLL…ALFT), 121 to 141 (LALL…SLYM), 145 to 165 (SVYG…VGYC), 176 to 196 (VILL…IAIF), 222 to 242 (IVLY…AGYT), 245 to 265 (AFMA…LKGY), and 277 to 297 (QVFG…ALDF).

It belongs to the UbiA prenyltransferase family. Protoheme IX farnesyltransferase subfamily.

The protein resides in the cell inner membrane. The catalysed reaction is heme b + (2E,6E)-farnesyl diphosphate + H2O = Fe(II)-heme o + diphosphate. The protein operates within porphyrin-containing compound metabolism; heme O biosynthesis; heme O from protoheme: step 1/1. Converts heme B (protoheme IX) to heme O by substitution of the vinyl group on carbon 2 of heme B porphyrin ring with a hydroxyethyl farnesyl side group. This chain is Protoheme IX farnesyltransferase 2, found in Shewanella sp. (strain MR-4).